Reading from the N-terminus, the 285-residue chain is Protein phosphatase 1 regulatory subunit 3B (285 aa).

The PP1-binding motif signature appears at 62-65 (RVSF). The 109-residue stretch at 125–233 (RNRLQADHVC…SNRGKNYRII (109 aa)) folds into the CBM21 domain. A Phosphoserine modification is found at serine 261.

In terms of assembly, interacts with glycogen, PPP1CC catalytic subunit of PP1 and PYGL. Associates with glycogen particles. Forms complexes with debranching enzyme, glycogen phosphorylase, glycogen synthase and phosphorylase kinase which is necessary for its regulation of PP1 activity. As to expression, highly expressed in the liver and, at lower levels, in skeletal muscle, including in vastus lateralis, gastrocnemius and soleus (at protein level). Highest mRNA levels are observed in skeletal muscle, and only moderate levels in liver and heart. Weak expression in placenta and lung.

Its function is as follows. Acts as a glycogen-targeting subunit for phosphatase PP1. Facilitates interaction of the PP1 with enzymes of the glycogen metabolism and regulates its activity. Suppresses the rate at which PP1 dephosphorylates (inactivates) glycogen phosphorylase and enhances the rate at which it activates glycogen synthase and therefore limits glycogen breakdown. Its activity is inhibited by PYGL, resulting in inhibition of the glycogen synthase and glycogen phosphorylase phosphatase activities of PP1. Dramatically increases basal and insulin-stimulated glycogen synthesis upon overexpression in hepatocytes. The chain is Protein phosphatase 1 regulatory subunit 3B (PPP1R3B) from Homo sapiens (Human).